A 453-amino-acid polypeptide reads, in one-letter code: Tubulin delta chain (453 aa).

GTP is bound at residue 143–149 (AGGTGSG).

Belongs to the tubulin family. As to quaternary structure, found in a complex with TEDC1, TEDC2, TUBE1 and TUBD1.

It is found in the nucleus. The protein localises to the cytoplasm. The protein resides in the cytoskeleton. It localises to the microtubule organizing center. Its subcellular location is the centrosome. It is found in the centriole. The protein localises to the cell projection. The protein resides in the cilium. Functionally, acts as a positive regulator of hedgehog signaling and regulates ciliary function. The protein is Tubulin delta chain (TUBD1) of Macaca fascicularis (Crab-eating macaque).